Reading from the N-terminus, the 265-residue chain is Glutamate racemase (265 aa).

Substrate-binding positions include 9–10 and 41–42; these read DS and YS. Residue Cys-73 is the Proton donor/acceptor of the active site. Residue 74 to 75 coordinates substrate; it reads NT. Cys-184 acts as the Proton donor/acceptor in catalysis. 185–186 contacts substrate; the sequence is TH.

The protein belongs to the aspartate/glutamate racemases family.

It catalyses the reaction L-glutamate = D-glutamate. It participates in cell wall biogenesis; peptidoglycan biosynthesis. Its function is as follows. Provides the (R)-glutamate required for cell wall biosynthesis. This is Glutamate racemase from Actinobacillus pleuropneumoniae serotype 5b (strain L20).